We begin with the raw amino-acid sequence, 157 residues long: RNA-binding protein 3 (157 aa).

Positions 6–84 constitute an RRM domain; that stretch reads GKLFVGGLNF…RQIRVDHAGK (79 aa). R47 is modified (omega-N-methylarginine). The segment at 81–157 is disordered; the sequence is HAGKSARGTR…GGNYRDNYDN (77 aa). Residue R105 is modified to Asymmetric dimethylarginine; alternate. Position 105 is a dimethylated arginine; in A2780 ovarian carcinoma cell line (R105). R105 is modified (omega-N-methylarginine; alternate). Residues 105 to 114 are compositionally biased toward gly residues; the sequence is RGGGDQGYGS. An omega-N-methylarginine mark is found at R121 and R131. S147 bears the Phosphoserine mark. Y155 bears the Phosphotyrosine mark.

As to quaternary structure, interacts with RPL4. Associates with the 60S ribosomal subunits in an RNA-independent manner. Associates with ribosomes. Post-translationally, arg-105 is dimethylated, probably to asymmetric dimethylarginine. Phosphorylated.

It localises to the nucleus. The protein localises to the cytoplasm. Its subcellular location is the cell projection. It is found in the dendrite. Cold-inducible mRNA binding protein that enhances global protein synthesis at both physiological and mild hypothermic temperatures. Reduces the relative abundance of microRNAs, when overexpressed. Enhances phosphorylation of translation initiation factors and active polysome formation. This chain is RNA-binding protein 3 (RBM3), found in Homo sapiens (Human).